The chain runs to 858 residues: Bifunctional uridylyltransferase/uridylyl-removing enzyme (858 aa).

Residues Met-1 to Ala-318 form a uridylyltransferase region. The tract at residues Ile-319–Leu-674 is uridylyl-removing. Residues Val-437–Leu-559 form the HD domain. ACT domains are found at residues Gln-675–Val-756 and Arg-789–Glu-858.

It belongs to the GlnD family. The cofactor is Mg(2+).

The catalysed reaction is [protein-PII]-L-tyrosine + UTP = [protein-PII]-uridylyl-L-tyrosine + diphosphate. The enzyme catalyses [protein-PII]-uridylyl-L-tyrosine + H2O = [protein-PII]-L-tyrosine + UMP + H(+). Uridylyltransferase (UTase) activity is inhibited by glutamine, while glutamine activates uridylyl-removing (UR) activity. Modifies, by uridylylation and deuridylylation, the PII regulatory proteins (GlnB and homologs), in response to the nitrogen status of the cell that GlnD senses through the glutamine level. Under low glutamine levels, catalyzes the conversion of the PII proteins and UTP to PII-UMP and PPi, while under higher glutamine levels, GlnD hydrolyzes PII-UMP to PII and UMP (deuridylylation). Thus, controls uridylylation state and activity of the PII proteins, and plays an important role in the regulation of nitrogen assimilation and metabolism. This chain is Bifunctional uridylyltransferase/uridylyl-removing enzyme, found in Bordetella avium (strain 197N).